The primary structure comprises 321 residues: Protein ATP1B4 (321 aa).

Residues 1–41 (MEPGMEMNTASEGGTRRGPENKHEEKVQDPNRGEAETKAEM) form a disordered region. Topologically, residues 1 to 72 (MEPGMEMNTA…RTCMGRTAKS (72 aa)) are cytoplasmic. The span at 14–41 (GTRRGPENKHEEKVQDPNRGEAETKAEM) shows a compositional bias: basic and acidic residues. A helical membrane pass occupies residues 73-93 (WGLILLFYFIFYTCLAGMFAF). Topologically, residues 94-321 (CMYVMLLTLS…RIIFTLSIGK (228 aa)) are extracellular. N-linked (GlcNAc...) asparagine glycans are attached at residues Asn132, Asn176, and Asn193. A disulfide bridge links Cys165 with Cys184. 2 disulfide bridges follow: Cys194-Cys210 and Cys233-Cys293. 3 N-linked (GlcNAc...) asparagine glycosylation sites follow: Asn239, Asn252, and Asn270.

Belongs to the X(+)/potassium ATPases subunit beta family. Composed of two subunits: alpha (catalytic) and beta (accessory). In terms of processing, glycosylated. In terms of tissue distribution, expressed in skeletal muscle, intestine, heart, brain, retina, inner ear and skin.

It is found in the membrane. This is the non-catalytic component of the active enzyme, which catalyzes the hydrolysis of ATP coupled with the exchange of Na(+) and K(+) ions across the plasma membrane. This Gallus gallus (Chicken) protein is Protein ATP1B4 (ATP1B4).